Consider the following 272-residue polypeptide: S-adenosylmethionine decarboxylase proenzyme (272 aa).

Ser-117 acts as the Schiff-base intermediate with substrate; via pyruvic acid in catalysis. Position 117 is a pyruvic acid (Ser); by autocatalysis (Ser-117). The active-site Proton acceptor; for processing activity is the His-122. Cys-145 serves as the catalytic Proton donor; for catalytic activity.

The protein belongs to the prokaryotic AdoMetDC family. Type 2 subfamily. In terms of assembly, heterooctamer of four alpha and four beta chains arranged as a tetramer of alpha/beta heterodimers. Pyruvate is required as a cofactor. In terms of processing, is synthesized initially as an inactive proenzyme. Formation of the active enzyme involves a self-maturation process in which the active site pyruvoyl group is generated from an internal serine residue via an autocatalytic post-translational modification. Two non-identical subunits are generated from the proenzyme in this reaction, and the pyruvate is formed at the N-terminus of the alpha chain, which is derived from the carboxyl end of the proenzyme. The post-translation cleavage follows an unusual pathway, termed non-hydrolytic serinolysis, in which the side chain hydroxyl group of the serine supplies its oxygen atom to form the C-terminus of the beta chain, while the remainder of the serine residue undergoes an oxidative deamination to produce ammonia and the pyruvoyl group blocking the N-terminus of the alpha chain.

The enzyme catalyses S-adenosyl-L-methionine + H(+) = S-adenosyl 3-(methylsulfanyl)propylamine + CO2. It participates in amine and polyamine biosynthesis; S-adenosylmethioninamine biosynthesis; S-adenosylmethioninamine from S-adenosyl-L-methionine: step 1/1. Its function is as follows. Catalyzes the decarboxylation of S-adenosylmethionine to S-adenosylmethioninamine (dcAdoMet), the propylamine donor required for the synthesis of the polyamines spermine and spermidine from the diamine putrescine. The chain is S-adenosylmethionine decarboxylase proenzyme from Halorhodospira halophila (strain DSM 244 / SL1) (Ectothiorhodospira halophila (strain DSM 244 / SL1)).